A 293-amino-acid chain; its full sequence is Triacylglycerol lipase (293 aa).

The region spanning 10 to 206 (PILLVHGLFG…YYSWSGIIKG (197 aa)) is the AB hydrolase-1 domain. Leu-17 contributes to the substrate binding site. Ser-83 acts as the Nucleophile in catalysis. Gln-84 provides a ligand contact to substrate. Asp-217 lines the Ca(2+) pocket. Catalysis depends on charge relay system residues Asp-238 and His-260. Residues Asp-262, His-266, and Arg-269 each contribute to the Ca(2+) site.

It belongs to the AB hydrolase superfamily. Pseudomonas lipase family. Ca(2+) is required as a cofactor.

It is found in the secreted. The catalysed reaction is a triacylglycerol + H2O = a diacylglycerol + a fatty acid + H(+). Its function is as follows. Catalyzes the hydrolysis of triacylglycerols, with the highest activity with tributyrin (C4), lower activity with tricaprylin (C8), and much lower activity with triacetin (C2), trilaurin (C12) and triolein (C18). The protein is Triacylglycerol lipase (lips) of Pseudomonas fragi.